A 1079-amino-acid chain; its full sequence is Translation initiation factor IF-2 (1079 aa).

Basic and acidic residues-rich tracts occupy residues 52 to 65 (VQAQ…KEGN), 75 to 90 (RDGD…KAPE), and 102 to 134 (APER…KEPQ). Residues 52 to 488 (VQAQRDGGAR…RGKKDVRPAA (437 aa)) form a disordered region. Positions 150 to 184 (APVAKVVEAAPAETPAPEAPAVKATVTAEAAPAKT) are enriched in low complexity. Residues 185–194 (VEPESERPQA) are compositionally biased toward basic and acidic residues. Residues 276 to 291 (AAVAQQQMQQQAAQQQ) show a composition bias toward low complexity. Residues 306-327 (GGYRPEGQREGGYRPEGQREGG) are compositionally biased toward basic and acidic residues. Composition is skewed to low complexity over residues 348-370 (EGGY…GPRP) and 380-398 (PGAP…APRP). Positions 419–429 (PRPGGFGGAPG) are enriched in gly residues. The span at 461–471 (PRGRSDDDVMR) shows a compositional bias: basic and acidic residues. Residues 473–482 (PRGRGKRGKK) are compositionally biased toward basic residues. Positions 578–745 (TRPPVVTIMG…LIAIQAEILE (168 aa)) constitute a tr-type G domain. Residues 587–594 (GHVDHGKT) form a G1 region. A GTP-binding site is contributed by 587-594 (GHVDHGKT). The G2 stretch occupies residues 612 to 616 (GITQH). The interval 633-636 (DTPG) is G3. GTP contacts are provided by residues 633–637 (DTPGH) and 687–690 (NKMD). A G4 region spans residues 687–690 (NKMD). The interval 723–725 (SAK) is G5.

The protein belongs to the TRAFAC class translation factor GTPase superfamily. Classic translation factor GTPase family. IF-2 subfamily.

It localises to the cytoplasm. Functionally, one of the essential components for the initiation of protein synthesis. Protects formylmethionyl-tRNA from spontaneous hydrolysis and promotes its binding to the 30S ribosomal subunits. Also involved in the hydrolysis of GTP during the formation of the 70S ribosomal complex. The protein is Translation initiation factor IF-2 of Nitratidesulfovibrio vulgaris (strain ATCC 29579 / DSM 644 / CCUG 34227 / NCIMB 8303 / VKM B-1760 / Hildenborough) (Desulfovibrio vulgaris).